A 399-amino-acid polypeptide reads, in one-letter code: N-acetylglucosamine-6-phosphate deacetylase (399 aa).

Residues H65, H67, and E135 each coordinate a divalent metal cation. 146-147 (AH) serves as a coordination point for substrate. Positions 201 and 222 each coordinate a divalent metal cation. Residues 225–226 (NG), R233, and 254–257 (DGHH) each bind substrate. D279 provides a ligand contact to a divalent metal cation. D279 functions as the Proton donor/acceptor in the catalytic mechanism. 312–314 (LAG) contacts substrate.

Belongs to the metallo-dependent hydrolases superfamily. NagA family. In terms of assembly, homodimer. The cofactor is a divalent metal cation.

It carries out the reaction N-acetyl-D-glucosamine 6-phosphate + H2O = D-glucosamine 6-phosphate + acetate. The protein operates within amino-sugar metabolism; N-acetylneuraminate degradation; D-fructose 6-phosphate from N-acetylneuraminate: step 4/5. Functionally, involved in the first committed step in the biosynthesis of amino-sugar-nucleotides. Catalyzes the hydrolysis of the N-acetyl group of N-acetylglucosamine-6-phosphate (GlcNAc-6-P) to yield glucosamine 6-phosphate and acetate. The chain is N-acetylglucosamine-6-phosphate deacetylase (manD) from Vibrio furnissii.